The primary structure comprises 353 residues: Protein MGF 360-11L (353 aa).

Belongs to the asfivirus MGF 360 family. As to quaternary structure, interacts with host TBK1 ad IRF7.

Plays a role in virus cell tropism, and may be required for efficient virus replication in macrophages. In addition, inhibits the phosphorylation of host TBK1 and IRF7 and thereby negatively regulates the host cGAS signaling pathway and antagonizes IFN-mediated antiviral activity. The polypeptide is Protein MGF 360-11L (African swine fever virus (isolate Tick/South Africa/Pretoriuskop Pr4/1996) (ASFV)).